Here is a 252-residue protein sequence, read N- to C-terminus: Imidazole glycerol phosphate synthase subunit HisF (252 aa).

Catalysis depends on residues Asp11 and Asp130.

This sequence belongs to the HisA/HisF family. In terms of assembly, heterodimer of HisH and HisF.

Its subcellular location is the cytoplasm. The catalysed reaction is 5-[(5-phospho-1-deoxy-D-ribulos-1-ylimino)methylamino]-1-(5-phospho-beta-D-ribosyl)imidazole-4-carboxamide + L-glutamine = D-erythro-1-(imidazol-4-yl)glycerol 3-phosphate + 5-amino-1-(5-phospho-beta-D-ribosyl)imidazole-4-carboxamide + L-glutamate + H(+). Its pathway is amino-acid biosynthesis; L-histidine biosynthesis; L-histidine from 5-phospho-alpha-D-ribose 1-diphosphate: step 5/9. Functionally, IGPS catalyzes the conversion of PRFAR and glutamine to IGP, AICAR and glutamate. The HisF subunit catalyzes the cyclization activity that produces IGP and AICAR from PRFAR using the ammonia provided by the HisH subunit. The chain is Imidazole glycerol phosphate synthase subunit HisF from Moorella thermoacetica (strain ATCC 39073 / JCM 9320).